The sequence spans 336 residues: Phosphate acetyltransferase (336 aa).

It belongs to the phosphate acetyltransferase and butyryltransferase family.

The protein localises to the cytoplasm. It catalyses the reaction acetyl-CoA + phosphate = acetyl phosphate + CoA. The protein operates within metabolic intermediate biosynthesis; acetyl-CoA biosynthesis; acetyl-CoA from acetate: step 2/2. The polypeptide is Phosphate acetyltransferase (pta) (Treponema pallidum (strain Nichols)).